A 249-amino-acid polypeptide reads, in one-letter code: 2,3-bisphosphoglycerate-dependent phosphoglycerate mutase (249 aa).

Substrate is bound by residues 9–16, 22–23, R61, 88–91, K99, 115–116, and 184–185; these read RHGQSQWN, TG, ERHY, RR, and GN. H10 (tele-phosphohistidine intermediate) is an active-site residue. E88 acts as the Proton donor/acceptor in catalysis.

The protein belongs to the phosphoglycerate mutase family. BPG-dependent PGAM subfamily. Homodimer.

The catalysed reaction is (2R)-2-phosphoglycerate = (2R)-3-phosphoglycerate. It functions in the pathway carbohydrate degradation; glycolysis; pyruvate from D-glyceraldehyde 3-phosphate: step 3/5. Functionally, catalyzes the interconversion of 2-phosphoglycerate and 3-phosphoglycerate. The sequence is that of 2,3-bisphosphoglycerate-dependent phosphoglycerate mutase from Stenotrophomonas maltophilia (strain K279a).